Here is a 345-residue protein sequence, read N- to C-terminus: Aspartate--ammonia ligase (345 aa).

This sequence belongs to the class-II aminoacyl-tRNA synthetase family. AsnA subfamily.

Its subcellular location is the cytoplasm. The catalysed reaction is L-aspartate + NH4(+) + ATP = L-asparagine + AMP + diphosphate + H(+). It functions in the pathway amino-acid biosynthesis; L-asparagine biosynthesis; L-asparagine from L-aspartate (ammonia route): step 1/1. The polypeptide is Aspartate--ammonia ligase (Bacteroides fragilis (strain ATCC 25285 / DSM 2151 / CCUG 4856 / JCM 11019 / LMG 10263 / NCTC 9343 / Onslow / VPI 2553 / EN-2)).